A 250-amino-acid chain; its full sequence is ATP synthase subunit a (250 aa).

A run of 6 helical transmembrane segments spans residues 26–46 (FTNA…FLYL), 84–104 (FFPM…LGMV), 114–134 (IIVT…YGFY), 143–163 (LFVP…IEII), 193–213 (FVAS…LPLI), and 216–236 (VALT…FAVL).

Belongs to the ATPase A chain family. As to quaternary structure, F-type ATPases have 2 components, CF(1) - the catalytic core - and CF(0) - the membrane proton channel. CF(1) has five subunits: alpha(3), beta(3), gamma(1), delta(1), epsilon(1). CF(0) has three main subunits: a(1), b(2) and c(9-12). The alpha and beta chains form an alternating ring which encloses part of the gamma chain. CF(1) is attached to CF(0) by a central stalk formed by the gamma and epsilon chains, while a peripheral stalk is formed by the delta and b chains.

The protein resides in the cell inner membrane. Functionally, key component of the proton channel; it plays a direct role in the translocation of protons across the membrane. This Rhizobium meliloti (strain 1021) (Ensifer meliloti) protein is ATP synthase subunit a.